The sequence spans 295 residues: Ribosomal protein L11 methyltransferase (295 aa).

S-adenosyl-L-methionine contacts are provided by T145, G166, D188, and N230.

Belongs to the methyltransferase superfamily. PrmA family.

The protein localises to the cytoplasm. The enzyme catalyses L-lysyl-[protein] + 3 S-adenosyl-L-methionine = N(6),N(6),N(6)-trimethyl-L-lysyl-[protein] + 3 S-adenosyl-L-homocysteine + 3 H(+). In terms of biological role, methylates ribosomal protein L11. The polypeptide is Ribosomal protein L11 methyltransferase (Haemophilus influenzae (strain PittEE)).